A 155-amino-acid chain; its full sequence is S-ribosylhomocysteine lyase (155 aa).

3 residues coordinate Fe cation: His-54, His-58, and Cys-122.

The protein belongs to the LuxS family. Homodimer. Fe cation is required as a cofactor.

It catalyses the reaction S-(5-deoxy-D-ribos-5-yl)-L-homocysteine = (S)-4,5-dihydroxypentane-2,3-dione + L-homocysteine. Functionally, involved in the synthesis of autoinducer 2 (AI-2) which is secreted by bacteria and is used to communicate both the cell density and the metabolic potential of the environment. The regulation of gene expression in response to changes in cell density is called quorum sensing. Catalyzes the transformation of S-ribosylhomocysteine (RHC) to homocysteine (HC) and 4,5-dihydroxy-2,3-pentadione (DPD). This is S-ribosylhomocysteine lyase from Deinococcus geothermalis (strain DSM 11300 / CIP 105573 / AG-3a).